The following is a 130-amino-acid chain: Small ribosomal subunit protein uS11 (130 aa).

The protein belongs to the universal ribosomal protein uS11 family. In terms of assembly, part of the 30S ribosomal subunit. Interacts with proteins S7 and S18. Binds to IF-3.

Its function is as follows. Located on the platform of the 30S subunit, it bridges several disparate RNA helices of the 16S rRNA. Forms part of the Shine-Dalgarno cleft in the 70S ribosome. This Dehalococcoides mccartyi (strain ATCC BAA-2266 / KCTC 15142 / 195) (Dehalococcoides ethenogenes (strain 195)) protein is Small ribosomal subunit protein uS11.